The chain runs to 507 residues: ATP synthase subunit alpha, chloroplastic (507 aa).

An ATP-binding site is contributed by 170–177 (GDRQTGKT).

This sequence belongs to the ATPase alpha/beta chains family. F-type ATPases have 2 components, CF(1) - the catalytic core - and CF(0) - the membrane proton channel. CF(1) has five subunits: alpha(3), beta(3), gamma(1), delta(1), epsilon(1). CF(0) has four main subunits: a, b, b' and c.

It localises to the plastid. Its subcellular location is the chloroplast thylakoid membrane. It catalyses the reaction ATP + H2O + 4 H(+)(in) = ADP + phosphate + 5 H(+)(out). In terms of biological role, produces ATP from ADP in the presence of a proton gradient across the membrane. The alpha chain is a regulatory subunit. This Citrus sinensis (Sweet orange) protein is ATP synthase subunit alpha, chloroplastic.